A 461-amino-acid polypeptide reads, in one-letter code: Lysosomal proton-coupled steroid conjugate and bile acid symporter SLC46A3 (461 aa).

The signal sequence occupies residues 1–25 (MKISFIEPAILLYAFAMTLTIPLTA). At 26-70 (QYVYRRIWEETGNYTFTSSSNVSECEQNKSSSTFAFQEEVQKKAS) the chain is on the extracellular side. N-linked (GlcNAc...) asparagine glycosylation is found at N38, N46, and N53. A helical membrane pass occupies residues 71 to 91 (LFSLQVEISGLIPGLVSTFML). The Cytoplasmic segment spans residues 92–103 (LSSSDNHGRKLP). The chain crosses the membrane as a helical span at residues 104–124 (MVLSSLGSLGTNLWLCAMSYF). Residues 125–135 (DLPLQLLVAST) lie on the Extracellular side of the membrane. The chain crosses the membrane as a helical span at residues 136–156 (FIGALFGNYTTFWGACFAYIV). The Cytoplasmic segment spans residues 157 to 170 (DQEKEYKHRIIRIA). A helical transmembrane segment spans residues 171–191 (VLDFMLGVVTGLTGLSSGYFI). Topologically, residues 192–197 (RELGFA) are extracellular. A helical membrane pass occupies residues 198 to 218 (WSYFIIAVVVLVNLAYILFFL). Residues 219–260 (SDPIKESSSQIVTMSCSESLKDLFYRTYMLFKNGSCKRRSLL) are Cytoplasmic-facing. Residues 261–281 (CLLIFTLVVYFFVVFGITPVF) form a helical membrane-spanning segment. Over 282-301 (TLYELGPPLCWNEVYIGYGS) the chain is Extracellular. A helical transmembrane segment spans residues 302–322 (ALGSLSFLSSFLGIWLFSYCL). Over 323-324 (KD) the chain is Cytoplasmic. A helical membrane pass occupies residues 325–345 (IHIAYVGIFTTMVGMMLTAFT). The Extracellular portion of the chain corresponds to 346 to 347 (RT). A helical transmembrane segment spans residues 348-368 (TLMMFLVRISFFFTIMPLSIL). At 369 to 381 (RSMLSKVVHSTEQ) the chain is on the cytoplasmic side. The chain crosses the membrane as a helical span at residues 382–402 (GVLFACIAFLETLGGVTSTSA). Over 403–415 (YNGIYSATVAWYP) the chain is Extracellular. A helical membrane pass occupies residues 416 to 436 (GFVFLLSAGLLVLPAVSLCMV). Residues 437–461 (KCIGWEEGSYTLLIHDEPSEHTSDS) are Cytoplasmic-facing. The short motif at 446–449 (YTLL) is the Tyrosine-based lysosomal-sorting motif element.

This sequence belongs to the major facilitator superfamily. SLC46A family.

The protein localises to the lysosome membrane. The enzyme catalyses estrone 3-sulfate(out) + n H(+)(out) = estrone 3-sulfate(in) + n H(+)(in). The catalysed reaction is 25-hydroxyvitamin D3 sulfate(out) + n H(+)(out) = 25-hydroxyvitamin D3 sulfate(in) + n H(+)(in). It catalyses the reaction cholate(out) + n H(+)(out) = cholate(in) + n H(+)(in). It carries out the reaction glycocholate(out) + n H(+)(out) = glycocholate(in) + n H(+)(in). The enzyme catalyses taurocholate(out) + n H(+)(out) = taurocholate(in) + n H(+)(in). The catalysed reaction is dehydroepiandrosterone 3-sulfate(out) + n H(+)(out) = dehydroepiandrosterone 3-sulfate(in) + n H(+)(in). It catalyses the reaction N-acetyl-D-muramoyl-L-alanyl-D-isoglutamine(out) + n H(+)(out) = N-acetyl-D-muramoyl-L-alanyl-D-isoglutamine(in) + n H(+)(in). It carries out the reaction 2',3'-cGAMP(out) + n H(+)(out) = 2',3'-cGAMP(in) + n H(+)(in). Functionally, lysosomal proton-coupled steroid conjugate and bile acid transporter. Preferentially recognizes lipophilic steroid conjugates or bile acis as endogenous substrates and seems to mediate escape from lysosomes to the cytoplasm. Modulates hepatic cytosolic copper homeostasis, maybe acting as a lysosomal copper transporter and sequestering copper ions in the lysosome. Delivers pathogen-associated molecular patterns to cytosolic pattern recognition receptors as part of the innate immune response to microbes. Selectively transports bacterial muramyl dipeptide (MDP) into the cytosol for recognition by NOD2, triggering inflammatory responses. Likely acts as a redundant importer of cyclic GMP-AMP dinucleotides (cGAMPs) in monocyte and macrophage cell lineages. The transport mechanism, its electrogenicity and stoichiometry remain to be elucidated. The protein is Lysosomal proton-coupled steroid conjugate and bile acid symporter SLC46A3 (Slc46a3) of Rattus norvegicus (Rat).